The primary structure comprises 444 residues: ATP-dependent protease ATPase subunit HslU (444 aa).

ATP is bound by residues Ile-20 and 62–67; that span reads GVGKTE. The interval 130–158 is disordered; it reads EDRILDALVPPPRGASGEPERGEDNSARQ. The ATP site is built by Asp-257, Glu-322, and Arg-394.

Belongs to the ClpX chaperone family. HslU subfamily. A double ring-shaped homohexamer of HslV is capped on each side by a ring-shaped HslU homohexamer. The assembly of the HslU/HslV complex is dependent on binding of ATP.

It localises to the cytoplasm. ATPase subunit of a proteasome-like degradation complex; this subunit has chaperone activity. The binding of ATP and its subsequent hydrolysis by HslU are essential for unfolding of protein substrates subsequently hydrolyzed by HslV. HslU recognizes the N-terminal part of its protein substrates and unfolds these before they are guided to HslV for hydrolysis. This chain is ATP-dependent protease ATPase subunit HslU, found in Bordetella pertussis (strain Tohama I / ATCC BAA-589 / NCTC 13251).